We begin with the raw amino-acid sequence, 306 residues long: Mating type protein SmtA-1 (306 aa).

A DNA-binding region (alpha box) is located at residues 49-104; sequence APKKKVNGFMGFRSYYSPLFSQFPQKARSPFMTILWQHDPFHNEWDFMCSVYSSIR.

This sequence belongs to the MATALPHA1 family.

The protein resides in the nucleus. Mating type proteins are sequence specific DNA-binding proteins that act as master switches in fungal differentiation by controlling gene expression in a cell type-specific fashion. Transcriptional activator that induces the transcription of alpha-specific genes. The chain is Mating type protein SmtA-1 (SMTA1) from Sordaria macrospora (strain ATCC MYA-333 / DSM 997 / K(L3346) / K-hell).